The primary structure comprises 559 residues: POU domain protein 1 (559 aa).

Positions 259–333 (EDLPSSDDLE…LLQKWLHEAD (75 aa)) constitute a POU-specific domain. A DNA-binding region (homeobox) is located at residues 351–410 (KRKKRTSIEANVKSILESSFMKLSKPSAQDISSLAEKLSLEKEVVRVWFCNRRQKEKRIT).

This sequence belongs to the POU transcription factor family.

Its subcellular location is the nucleus. The protein is POU domain protein 1 (POU1) of Dugesia japonica (Planarian).